The following is a 109-amino-acid chain: uncharacterized protein (109 aa).

It localises to the mitochondrion. This is an uncharacterized protein from Marchantia polymorpha (Common liverwort).